A 336-amino-acid polypeptide reads, in one-letter code: tRNA(Ile)-lysidine synthase (336 aa).

40–45 contacts ATP; the sequence is SGGQDS.

The protein belongs to the tRNA(Ile)-lysidine synthase family.

The protein localises to the cytoplasm. The catalysed reaction is cytidine(34) in tRNA(Ile2) + L-lysine + ATP = lysidine(34) in tRNA(Ile2) + AMP + diphosphate + H(+). Ligates lysine onto the cytidine present at position 34 of the AUA codon-specific tRNA(Ile) that contains the anticodon CAU, in an ATP-dependent manner. Cytidine is converted to lysidine, thus changing the amino acid specificity of the tRNA from methionine to isoleucine. This chain is tRNA(Ile)-lysidine synthase, found in Prochlorococcus marinus (strain SARG / CCMP1375 / SS120).